Consider the following 259-residue polypeptide: MVKYAGLLQFKGTNYAGFQRQKNGTAIQNVLESTLSQINNRATVVRYSGRTDAGVHAWGMPFVFWGREDLSADKWMFILNRMLPKDMRVISVVRTSPEFDPQLSAVAKQYLYCATQERLGPLWDDFFAYLPNLSIETSAVISAARKLVGEHDFKGFSKKGSSVKSTRRKLYEVSVMFTHSRMYFSFVGNGFLYGMVRLMVGTLLQIGWGKQDVNFIDEVLSGNAVANYSAPAQGLHLVKVWLEPDPFLESVKANERDFS.

Aspartate 52 (nucleophile) is an active-site residue. Position 110 (tyrosine 110) interacts with substrate.

This sequence belongs to the tRNA pseudouridine synthase TruA family. As to quaternary structure, homodimer.

The catalysed reaction is uridine(38/39/40) in tRNA = pseudouridine(38/39/40) in tRNA. Its function is as follows. Formation of pseudouridine at positions 38, 39 and 40 in the anticodon stem and loop of transfer RNAs. This is tRNA pseudouridine synthase A from Coprothermobacter proteolyticus (strain ATCC 35245 / DSM 5265 / OCM 4 / BT).